A 320-amino-acid polypeptide reads, in one-letter code: E3 ubiquitin-protein ligase RZF1 (320 aa).

At serine 2 the chain carries N-acetylserine. The RING-type; atypical zinc finger occupies 186 to 227 (CPVCKDEFELKSEAKQMPCHHIYHSDCIVPWLVQHNSCPVCR). Residues 229-320 (ELPSRGSSSS…MGYSGWPFDY (92 aa)) are disordered. Composition is skewed to low complexity over residues 232 to 249 (SRGSSSSTQSSQNRSTNG) and 295 to 308 (QQQQQHQHQHQQQQ).

Expressed in seedlings and in flowers.

The catalysed reaction is S-ubiquitinyl-[E2 ubiquitin-conjugating enzyme]-L-cysteine + [acceptor protein]-L-lysine = [E2 ubiquitin-conjugating enzyme]-L-cysteine + N(6)-ubiquitinyl-[acceptor protein]-L-lysine.. In terms of biological role, E3 ubiquitin-protein ligase that promotes osmotic stress and abscisic acid (ABA) responses. Negatively regulates drought-mediated control of early seedling development, probably by influencing proline content, water loss, membrane ion leakage and the expression of dehydration stress-related genes (e.g. RAB18, RD29A, RD29B, AOX1A, ERD15, ERD1, COR15A, P5CS1 and P5CR). Modulates bZIP11 accumulation during rehydration following drought. The chain is E3 ubiquitin-protein ligase RZF1 from Arabidopsis thaliana (Mouse-ear cress).